The sequence spans 130 residues: MAEYGTLLQDLTNNITLEDLEQLKSACKEDIPSEKSEEITTGSAWFSFLESHNKLDKDNLSYIEHIFEISRRPDLLTMVVDYRTRVLKISEEDELDTKLTRIPSAKKYKDIIRQPSEEEIIKLAPPPKKA.

Positions 3-81 constitute a DED domain; it reads EYGTLLQDLT…RPDLLTMVVD (79 aa). Phosphoserine occurs at positions 61, 90, 104, and 116. The tract at residues 98–107 is microtubule-binding; the sequence is KLTRIPSAKK. Residues 122 to 129 are microtubule-binding; the sequence is KLAPPPKK.

Binds RPS6KA3, MAPK3 and MAPK1. Transient interaction with PLD1 and PLD2. Interacts with CASP8 and FADD. In terms of processing, phosphorylated by protein kinase C and calcium-calmodulin-dependent protein kinase. These phosphorylation events are modulated by neurotransmitters or hormones. Ubiquitously expressed. Most abundant in tissues such as heart, brain, muscle and adipose tissue which utilize glucose as an energy source. Lower expression in glucose-producing tissues. Higher levels of expression are found in tissues from individuals with type 2 diabetes than in controls.

Its subcellular location is the cytoplasm. In terms of biological role, blocks Ras-mediated inhibition of integrin activation and modulates the ERK MAP kinase cascade. Inhibits RPS6KA3 activities by retaining it in the cytoplasm. Inhibits both TNFRSF6- and TNFRSF1A-mediated CASP8 activity and apoptosis. Regulates glucose transport by controlling both the content of SLC2A1 glucose transporters on the plasma membrane and the insulin-dependent trafficking of SLC2A4 from the cell interior to the surface. The protein is Astrocytic phosphoprotein PEA-15 (PEA15) of Homo sapiens (Human).